Reading from the N-terminus, the 405-residue chain is L-carnitine CoA-transferase (405 aa).

CoA is bound by residues K97 and R104. The active-site Nucleophile is the D169.

It belongs to the CoA-transferase III family. CaiB subfamily. Homodimer.

It localises to the cytoplasm. It catalyses the reaction crotonobetainyl-CoA + (R)-carnitine = crotonobetaine + (R)-carnitinyl-CoA. It carries out the reaction 4-(trimethylamino)butanoyl-CoA + (R)-carnitine = (R)-carnitinyl-CoA + 4-(trimethylamino)butanoate. It participates in amine and polyamine metabolism; carnitine metabolism. Catalyzes the reversible transfer of the CoA moiety from gamma-butyrobetainyl-CoA to L-carnitine to generate L-carnitinyl-CoA and gamma-butyrobetaine. Is also able to catalyze the reversible transfer of the CoA moiety from gamma-butyrobetainyl-CoA or L-carnitinyl-CoA to crotonobetaine to generate crotonobetainyl-CoA. This Shigella flexneri serotype 5b (strain 8401) protein is L-carnitine CoA-transferase.